The chain runs to 407 residues: Phosphopentomutase (407 aa).

Mn(2+) is bound by residues D10, D306, H311, D347, H348, and H359.

This sequence belongs to the phosphopentomutase family. The cofactor is Mn(2+).

The protein resides in the cytoplasm. The enzyme catalyses 2-deoxy-alpha-D-ribose 1-phosphate = 2-deoxy-D-ribose 5-phosphate. It catalyses the reaction alpha-D-ribose 1-phosphate = D-ribose 5-phosphate. It functions in the pathway carbohydrate degradation; 2-deoxy-D-ribose 1-phosphate degradation; D-glyceraldehyde 3-phosphate and acetaldehyde from 2-deoxy-alpha-D-ribose 1-phosphate: step 1/2. Its function is as follows. Isomerase that catalyzes the conversion of deoxy-ribose 1-phosphate (dRib-1-P) and ribose 1-phosphate (Rib-1-P) to deoxy-ribose 5-phosphate (dRib-5-P) and ribose 5-phosphate (Rib-5-P), respectively. This Shigella dysenteriae serotype 1 (strain Sd197) protein is Phosphopentomutase.